Consider the following 273-residue polypeptide: Octanoyltransferase LipM (273 aa).

Residues 33-244 (GKTPPTLRFY…AFTRLYAVEF (212 aa)) form the BPL/LPL catalytic domain. Cys146 acts as the Acyl-thioester intermediate in catalysis.

Belongs to the octanoyltransferase LipM family. As to quaternary structure, monomer.

The enzyme catalyses octanoyl-[ACP] + L-lysyl-[protein] = N(6)-octanoyl-L-lysyl-[protein] + holo-[ACP] + H(+). Its pathway is protein modification; protein lipoylation via endogenous pathway; protein N(6)-(lipoyl)lysine from octanoyl-[acyl-carrier-protein]. Functionally, catalyzes the transfer of endogenously produced octanoic acid from octanoyl-acyl-carrier-protein onto the lipoyl domain of GcvH, an intermediate carrier during protein lipoylation. This chain is Octanoyltransferase LipM, found in Moorella thermoacetica (strain ATCC 39073 / JCM 9320).